The primary structure comprises 148 residues: Large ribosomal subunit protein bL9 (148 aa).

Belongs to the bacterial ribosomal protein bL9 family.

Functionally, binds to the 23S rRNA. In Alkaliphilus oremlandii (strain OhILAs) (Clostridium oremlandii (strain OhILAs)), this protein is Large ribosomal subunit protein bL9.